The chain runs to 437 residues: Aspartic proteinase nepenthesin-1 (437 aa).

The signal sequence occupies residues 1 to 24 (MASSLYSFLLALSIVYIFVAPTHS). A propeptide spans 25–78 (TSRTALNHRHEAKVTGFQIMLEHVDSGKNLTKFQLLERAIERGSRRLQRLEAML) (activation peptide). N-linked (GlcNAc...) asparagine glycosylation is found at Asn-53 and Asn-98. In terms of domain architecture, Peptidase A1 spans 95-430 (YLMNLSIGTP…DTGNSVVSFA (336 aa)). The active site involves Asp-113. Cystine bridges form between Cys-123–Cys-126, Cys-129–Cys-203, Cys-150–Cys-168, Cys-155–Cys-163, Cys-240–Cys-434, and Cys-354–Cys-395. Asn-131 carries an N-linked (GlcNAc...) asparagine glycan. 3 N-linked (GlcNAc...) asparagine glycosylation sites follow: Asn-198, Asn-267, and Asn-307. Residue Asp-315 is part of the active site. A glycan (N-linked (GlcNAc...) asparagine) is linked at Asn-345.

Belongs to the peptidase A1 family.

It is found in the secreted. It carries out the reaction Similar to pepsin, but also cleaves on either side of Asp and at Lys-|-Arg.. With respect to regulation, inhibited by pepstatin and by diazoacetyl-D,L-norleucine methyl ester (DAN) in the presence of Cu(2+) ions. Extracellular proteinase found in the pitcher fluid of carnivorous plants. Digest prey for nitrogen uptake. The protein is Aspartic proteinase nepenthesin-1 (nep1) of Nepenthes gracilis (Slender pitcher plant).